Reading from the N-terminus, the 337-residue chain is Methylthioribose-1-phosphate isomerase (337 aa).

Residues 47 to 49 (RGA), Arg-81, and Gln-184 each bind substrate. Asp-225 serves as the catalytic Proton donor. 235–236 (NK) contributes to the substrate binding site.

Belongs to the eIF-2B alpha/beta/delta subunits family. MtnA subfamily.

It catalyses the reaction 5-(methylsulfanyl)-alpha-D-ribose 1-phosphate = 5-(methylsulfanyl)-D-ribulose 1-phosphate. Its pathway is amino-acid biosynthesis; L-methionine biosynthesis via salvage pathway; L-methionine from S-methyl-5-thio-alpha-D-ribose 1-phosphate: step 1/6. Catalyzes the interconversion of methylthioribose-1-phosphate (MTR-1-P) into methylthioribulose-1-phosphate (MTRu-1-P). The sequence is that of Methylthioribose-1-phosphate isomerase from Synechococcus sp. (strain CC9605).